A 165-amino-acid chain; its full sequence is Sporulation thiol-disulfide oxidoreductase A (165 aa).

The signal sequence occupies residues 1–26; that stretch reads MLTKRLLTIYIMLLGLIAWFPGAAQA. A Thioredoxin domain is found at 27 to 165; it reads EEKQPAVPAV…AEQLKEWTEE (139 aa). C65 and C68 are disulfide-bonded.

It belongs to the thioredoxin family.

The protein localises to the spore outer membrane. Functionally, thiol-disulfide oxidoreductase with a reductive function, involved in spore cortex synthesis. It could be involved either in breaking disulfide bonds in cortex components or in proteins that are important for cortex synthesis, or in thiol/disulfide bond interchange. The polypeptide is Sporulation thiol-disulfide oxidoreductase A (stoA) (Bacillus subtilis (strain 168)).